A 1254-amino-acid chain; its full sequence is Histone-lysine N-methyltransferase eggless (1254 aa).

Disordered stretches follow at residues 24–209 (ALVE…EIPR) and 228–248 (PVPR…SKTT). 2 stretches are compositionally biased toward basic and acidic residues: residues 40–57 (TPEK…KDLT) and 65–81 (KSQE…KDPE). Low complexity predominate over residues 112 to 125 (SVELLESPLKSPSS). Residues 136–162 (LEEKEKPGPAKELEPKESEPDSKESSK) are compositionally biased toward basic and acidic residues. A compositionally biased stretch (polar residues) spans 172–181 (ELISSPTSDD). 2 stretches are compositionally biased toward basic and acidic residues: residues 182–197 (SLAK…EHGQ) and 234–243 (AMQESKETQK). Residues 391–416 (TILQAKIERLAKKFEEVDLQLAQVQG) adopt a coiled-coil conformation. 2 Tudor domains span residues 535-607 (RLPI…SEKV) and 634-691 (QCTK…KETQ). A disordered region spans residues 734–760 (ARKSTSKSGSPASTAAPPTGSSSSSAV). Over residues 739–759 (SKSGSPASTAAPPTGSSSSSA) the composition is skewed to low complexity. The region spanning 811-877 (LDSYSPLSKP…DNFDFTPDLR (67 aa)) is the MBD domain. The region spanning 939 to 1011 (VCCDCEDDCS…NCLNRVVQHS (73 aa)) is the Pre-SET domain. Positions 941, 943, 947, 953, 955, 993, 997, 999, and 1003 each coordinate Zn(2+). One can recognise an SET domain in the interval 1014-1229 (MKLQVFKTSN…SGTELTWNYN (216 aa)). S-adenosyl-L-methionine contacts are provided by residues 1024 to 1026 (RGW), Asp-1062, and Tyr-1064. The segment covering 1081–1090 (YESDVERADL) has biased composition (basic and acidic residues). Positions 1081–1139 (YESDVERADLDHEDDNYGPDAEDDDDFRPNNYYQKKKEKLRSSRSNSSSTQNTELDSQE) are disordered. The span at 1091-1106 (DHEDDNYGPDAEDDDD) shows a compositional bias: acidic residues. Residues 1123-1134 (SRSNSSSTQNTE) are compositionally biased toward low complexity. S-adenosyl-L-methionine contacts are provided by residues Arg-1183 and 1186–1187 (NH). Zn(2+)-binding residues include Cys-1189, Cys-1242, Cys-1244, and Cys-1249. The region spanning 1238–1254 (KVLYCQCGAQNCRVRLL) is the Post-SET domain.

This sequence belongs to the class V-like SAM-binding methyltransferase superfamily. Histone-lysine methyltransferase family. Suvar3-9 subfamily.

It is found in the nucleus. Its subcellular location is the chromosome. It carries out the reaction L-lysyl(9)-[histone H3] + 3 S-adenosyl-L-methionine = N(6),N(6),N(6)-trimethyl-L-lysyl(9)-[histone H3] + 3 S-adenosyl-L-homocysteine + 3 H(+). Histone methyltransferase that specifically trimethylates 'Lys-9' of histone H3 in ovary. H3 'Lys-9' trimethylation represents a specific tag for epigenetic transcriptional repression by recruiting Su(var)205/HP1 to methylated histones. Plays a central role during oogenesis. This chain is Histone-lysine N-methyltransferase eggless (egg), found in Drosophila pseudoobscura pseudoobscura (Fruit fly).